Reading from the N-terminus, the 445-residue chain is 23S rRNA (uracil(1939)-C(5))-methyltransferase RlmD (445 aa).

The 59-residue stretch at 6–64 (RRLPREPFEIAITGLSHEGRGIAHHDERTLFVHGALPGERVRAVYTKRRRSVAEARVVE) folds into the TRAM domain. [4Fe-4S] cluster-binding residues include C77, C83, C86, and C165. Positions 274, 303, 308, 324, 351, and 372 each coordinate S-adenosyl-L-methionine. Residue C398 is the Nucleophile of the active site.

Belongs to the class I-like SAM-binding methyltransferase superfamily. RNA M5U methyltransferase family. RlmD subfamily.

It carries out the reaction uridine(1939) in 23S rRNA + S-adenosyl-L-methionine = 5-methyluridine(1939) in 23S rRNA + S-adenosyl-L-homocysteine + H(+). Its function is as follows. Catalyzes the formation of 5-methyl-uridine at position 1939 (m5U1939) in 23S rRNA. The sequence is that of 23S rRNA (uracil(1939)-C(5))-methyltransferase RlmD from Alkalilimnicola ehrlichii (strain ATCC BAA-1101 / DSM 17681 / MLHE-1).